Here is a 289-residue protein sequence, read N- to C-terminus: Glycine--tRNA ligase alpha subunit (289 aa).

This sequence belongs to the class-II aminoacyl-tRNA synthetase family. Tetramer of two alpha and two beta subunits.

Its subcellular location is the cytoplasm. The catalysed reaction is tRNA(Gly) + glycine + ATP = glycyl-tRNA(Gly) + AMP + diphosphate. The polypeptide is Glycine--tRNA ligase alpha subunit (glyQ) (Rickettsia prowazekii (strain Madrid E)).